The primary structure comprises 161 residues: Dermonecrotic toxin LarSicTox-alphaI-1 (161 aa).

It belongs to the arthropod phospholipase D family. Class II subfamily. The cofactor is Mg(2+). Contains 2 disulfide bonds. In terms of tissue distribution, expressed by the venom gland.

Its subcellular location is the secreted. It catalyses the reaction an N-(acyl)-sphingosylphosphocholine = an N-(acyl)-sphingosyl-1,3-cyclic phosphate + choline. The catalysed reaction is an N-(acyl)-sphingosylphosphoethanolamine = an N-(acyl)-sphingosyl-1,3-cyclic phosphate + ethanolamine. The enzyme catalyses a 1-acyl-sn-glycero-3-phosphocholine = a 1-acyl-sn-glycero-2,3-cyclic phosphate + choline. It carries out the reaction a 1-acyl-sn-glycero-3-phosphoethanolamine = a 1-acyl-sn-glycero-2,3-cyclic phosphate + ethanolamine. Functionally, dermonecrotic toxins cleave the phosphodiester linkage between the phosphate and headgroup of certain phospholipids (sphingolipid and lysolipid substrates), forming an alcohol (often choline) and a cyclic phosphate. This toxin acts on sphingomyelin (SM). It may also act on ceramide phosphoethanolamine (CPE), lysophosphatidylcholine (LPC) and lysophosphatidylethanolamine (LPE), but not on lysophosphatidylserine (LPS), and lysophosphatidylglycerol (LPG). It acts by transphosphatidylation, releasing exclusively cyclic phosphate products as second products. Induces dermonecrosis, hemolysis, increased vascular permeability, edema, inflammatory response, and platelet aggregation. The sequence is that of Dermonecrotic toxin LarSicTox-alphaI-1 from Loxosceles arizonica (Arizona brown spider).